Reading from the N-terminus, the 214-residue chain is Pyridoxine/pyridoxamine 5'-phosphate oxidase (214 aa).

Residues 9–12 and Lys-67 contribute to the substrate site; that span reads RKDY. FMN contacts are provided by residues 62–67, 77–78, Arg-83, Lys-84, and Gln-106; these read RMVLLK and FT. Residues Tyr-124, Arg-128, and Ser-132 each contribute to the substrate site. Residues 141-142 and Trp-186 contribute to the FMN site; that span reads QS. Residue 192–194 coordinates substrate; it reads RLH. Position 196 (Arg-196) interacts with FMN.

It belongs to the pyridoxamine 5'-phosphate oxidase family. As to quaternary structure, homodimer. The cofactor is FMN.

It carries out the reaction pyridoxamine 5'-phosphate + O2 + H2O = pyridoxal 5'-phosphate + H2O2 + NH4(+). The enzyme catalyses pyridoxine 5'-phosphate + O2 = pyridoxal 5'-phosphate + H2O2. The protein operates within cofactor metabolism; pyridoxal 5'-phosphate salvage; pyridoxal 5'-phosphate from pyridoxamine 5'-phosphate: step 1/1. It functions in the pathway cofactor metabolism; pyridoxal 5'-phosphate salvage; pyridoxal 5'-phosphate from pyridoxine 5'-phosphate: step 1/1. In terms of biological role, catalyzes the oxidation of either pyridoxine 5'-phosphate (PNP) or pyridoxamine 5'-phosphate (PMP) into pyridoxal 5'-phosphate (PLP). The chain is Pyridoxine/pyridoxamine 5'-phosphate oxidase from Nostoc sp. (strain PCC 7120 / SAG 25.82 / UTEX 2576).